We begin with the raw amino-acid sequence, 114 residues long: UPF0102 protein HPAG1_0809 (114 aa).

The protein belongs to the UPF0102 family.

The sequence is that of UPF0102 protein HPAG1_0809 from Helicobacter pylori (strain HPAG1).